Here is a 105-residue protein sequence, read N- to C-terminus: 5,5'-dehydrodivanillate O-demethylase ferredoxin subunit (105 aa).

One can recognise a 2Fe-2S ferredoxin-type domain in the interval 2–105 (AQLKVVTRDG…GMTVTIAPED (104 aa)). [2Fe-2S] cluster contacts are provided by Cys-40, Cys-46, Cys-49, and Cys-86.

This sequence belongs to the adrenodoxin/putidaredoxin family. As to quaternary structure, monomer. The three-component monooxygenase is composed of an oxygenase (LigXa), a ferredoxin (LigXc) and a ferredoxin reductase (LigXd). [2Fe-2S] cluster serves as cofactor.

It carries out the reaction 5,5'-dehydrodivanillate + NADH + O2 + H(+) = 2,2',3-trihydroxy-3'-methoxy-5,5'-dicarboxybiphenyl + formaldehyde + NAD(+) + H2O. Its function is as follows. Involved in the catabolism of 5,5'-dehydrodivanillate (DDVA), an intermediate in the biodegradation of lignin. Part of a three-component monooxygenase that catalyzes the O-demethylation of DDVA, leading to the formation of 2,2',3-trihydroxy-3'-methoxy-5,5'-dicarboxybiphenyl (OH-DDVA). LigXc probably functions as an intermediate electron transfer protein between LigXd and LigXa. The chain is 5,5'-dehydrodivanillate O-demethylase ferredoxin subunit from Sphingobium sp. (strain NBRC 103272 / SYK-6).